The chain runs to 288 residues: Probable branched-chain-amino-acid aminotransferase (288 aa).

K153 is subject to N6-(pyridoxal phosphate)lysine.

It belongs to the class-IV pyridoxal-phosphate-dependent aminotransferase family. Requires pyridoxal 5'-phosphate as cofactor.

It carries out the reaction L-leucine + 2-oxoglutarate = 4-methyl-2-oxopentanoate + L-glutamate. The enzyme catalyses L-isoleucine + 2-oxoglutarate = (S)-3-methyl-2-oxopentanoate + L-glutamate. It catalyses the reaction L-valine + 2-oxoglutarate = 3-methyl-2-oxobutanoate + L-glutamate. The protein operates within amino-acid biosynthesis; L-isoleucine biosynthesis; L-isoleucine from 2-oxobutanoate: step 4/4. It participates in amino-acid biosynthesis; L-leucine biosynthesis; L-leucine from 3-methyl-2-oxobutanoate: step 4/4. It functions in the pathway amino-acid biosynthesis; L-valine biosynthesis; L-valine from pyruvate: step 4/4. In terms of biological role, acts on leucine, isoleucine and valine. This Rickettsia typhi (strain ATCC VR-144 / Wilmington) protein is Probable branched-chain-amino-acid aminotransferase (ilvE).